A 646-amino-acid polypeptide reads, in one-letter code: A-kinase anchor protein 8-like (646 aa).

The segment at 1-268 (MSYTGFVQGS…MRRTWKTWTT (268 aa)) is sufficient for activation of CTE-mediated expression. Arginine 208 is subject to Asymmetric dimethylarginine; alternate. Position 208 is an omega-N-methylarginine; alternate (arginine 208). Residues arginine 217, arginine 237, and arginine 247 each carry the omega-N-methylarginine modification. Lysine 257 is modified (N6-acetyllysine). The interval 264-381 (KTWTTADFRT…QDKQKKRQRD (118 aa)) is disordered. Position 267 is a phosphothreonine (threonine 267). The Nuclear localization signal motif lies at 274-279 (KKKKRK). Positions 280–296 (QGGSPDEPDSKATRTDC) match the Nuclear export signal (NES) motif. Residue serine 283 is modified to Phosphoserine. A compositionally biased stretch (basic and acidic residues) spans 287 to 296 (PDSKATRTDC). Threonine 292 carries the post-translational modification Phosphothreonine. A Phosphoserine modification is found at serine 297. The span at 298 to 314 (DNSDSDNDEGTEGEATE) shows a compositional bias: acidic residues. The span at 337 to 349 (EDGREEGKEDPEK) shows a compositional bias: basic and acidic residues. The Nuclear localization signal signature appears at 362-364 (KRK). 2 consecutive C2H2 AKAP95-type zinc fingers follow at residues 391 to 413 (CSLC…SKFH) and 484 to 507 (CAAC…TMDH). The segment at 545-646 (GENPFTDSPE…DDEEGGGGAP (102 aa)) is disordered. The residue at position 552 (serine 552) is a Phosphoserine. The segment covering 552 to 563 (SPEEEKEQEEAE) has biased composition (acidic residues). Residues 564 to 586 (GGALDEGAQGEAAGISEGAEGVP) are compositionally biased toward low complexity. Over residues 587–607 (AQPPVPPEPAPGAVSPPPPPP) the composition is skewed to pro residues. The segment covering 634–646 (DVEDDEEGGGGAP) has biased composition (acidic residues).

Belongs to the AKAP95 family. In terms of assembly, interacts (via N-terminus) with DHX9 (via RGG region). Interacts with TMPO isoform Beta, PRPF40A, RNF43, lamin-B. Interacts with HDAC3; increased during mitosis. Interacts with EBV EBNA-LP. Interacts with HIV-1 reverse transcriptase/ribonuclease H. Phosphorylated on serine or threonine residues possibly by PKA; probably modulating the interaction with TMPO isoform Beta. Ubiquitously expressed. Expressed in the brain cortex (at protein level).

Its subcellular location is the nucleus. The protein localises to the nucleus matrix. It is found in the nucleus speckle. It localises to the PML body. The protein resides in the cytoplasm. Could play a role in constitutive transport element (CTE)-mediated gene expression by association with DHX9. Increases CTE-dependent nuclear unspliced mRNA export. Proposed to target PRKACA to the nucleus but does not seem to be implicated in the binding of regulatory subunit II of PKA. May be involved in nuclear envelope breakdown and chromatin condensation. May be involved in anchoring nuclear membranes to chromatin in interphase and in releasing membranes from chromating at mitosis. May regulate the initiation phase of DNA replication when associated with TMPO isoform Beta. Required for cell cycle G2/M transition and histone deacetylation during mitosis. In mitotic cells recruits HDAC3 to the vicinity of chromatin leading to deacetylation and subsequent phosphorylation at 'Ser-10' of histone H3; in this function seems to act redundantly with AKAP8. May be involved in regulation of pre-mRNA splicing. In terms of biological role, (Microbial infection) In case of EBV infection, may target PRKACA to EBNA-LP-containing nuclear sites to modulate transcription from specific promoters. Its function is as follows. (Microbial infection) Can synergize with DHX9 to activate the CTE-mediated gene expression of type D retroviruses. Functionally, (Microbial infection) In case of HIV-1 infection, involved in the DHX9-promoted annealing of host tRNA(Lys3) to viral genomic RNA as a primer in reverse transcription; in vitro negatively regulates DHX9 annealing activity. The polypeptide is A-kinase anchor protein 8-like (AKAP8L) (Homo sapiens (Human)).